Consider the following 95-residue polypeptide: UPF0045 protein CPE1503 (95 aa).

The protein belongs to the UPF0045 family.

This is UPF0045 protein CPE1503 from Clostridium perfringens (strain 13 / Type A).